Consider the following 282-residue polypeptide: MTAAADLYCVMGNPIAHSRSPWIHARFAQLTDQSLHYERRLVPLDGFAQALQSFAAEGGRGCNITVPFKLEAAQLATTRSERVQLAGAANTLVFDGGSIHADNTDGLGLVADITQGAGVPLAGRDVLLVGAGGAAAGVLGPLLRQHPRRIAVVNRTPARAQALVDSHAALAALQKTELLALDMQAPGADFDVIINATASSLEGGPVPVPASVLRPGSLAYDMMYGPAAQPFLDWASAHGATARDGLGMLVEQAAEAFLLWRGVRPPSAPVLQELRAAIAAGA.

Shikimate-binding positions include 18–20 and T65; that span reads SRS. The active-site Proton acceptor is K69. E81 provides a ligand contact to NADP(+). N90 and D105 together coordinate shikimate. Residues 130–134, 154–159, and M222 each bind NADP(+); these read GAGGA and NRTPAR. Y224 provides a ligand contact to shikimate. Residue G245 coordinates NADP(+).

The protein belongs to the shikimate dehydrogenase family. In terms of assembly, homodimer.

The enzyme catalyses shikimate + NADP(+) = 3-dehydroshikimate + NADPH + H(+). Its pathway is metabolic intermediate biosynthesis; chorismate biosynthesis; chorismate from D-erythrose 4-phosphate and phosphoenolpyruvate: step 4/7. Involved in the biosynthesis of the chorismate, which leads to the biosynthesis of aromatic amino acids. Catalyzes the reversible NADPH linked reduction of 3-dehydroshikimate (DHSA) to yield shikimate (SA). The protein is Shikimate dehydrogenase (NADP(+)) of Acidovorax ebreus (strain TPSY) (Diaphorobacter sp. (strain TPSY)).